Reading from the N-terminus, the 247-residue chain is Peroxisomal membrane protein 11A (247 aa).

The Cytoplasmic segment spans residues 1-83 (MDAFTRFTNQ…SIHATDLVPR (83 aa)). Residues 84–105 (LCLTLANLNRVIYFICDTILWV) form a helical membrane-spanning segment. Residues 106–219 (RSVGLTSGIN…DQLGIYKSNP (114 aa)) lie on the Lumenal side of the membrane. A helical transmembrane segment spans residues 220 to 239 (GIIGLGGLVSSIAGMITVAY). The required for homodimerization, interaction with PEX11G, and peroxisomal localization stretch occupies residues 220–239 (GIIGLGGLVSSIAGMITVAY). Residues 240–247 (PQMKLKTR) lie on the Cytoplasmic side of the membrane.

Belongs to the peroxin-11 family. In terms of assembly, homodimer. Heterodimer with PEX11G. Probably interacts with COPB2 and COPA. Interacts with PEX19. Interacts with FIS1. Seems not to be N-glycosylated.

Its subcellular location is the peroxisome membrane. May be involved in peroxisomal proliferation and may regulate peroxisomes division. May mediate binding of coatomer proteins to the peroxisomal membrane. Promotes membrane protrusion and elongation on the peroxisomal surface. The polypeptide is Peroxisomal membrane protein 11A (PEX11A) (Homo sapiens (Human)).